The chain runs to 452 residues: Adenylosuccinate synthetase isozyme 1 (452 aa).

Residues 1–22 form a disordered region; it reads MSGTRASNDRSSHPGGHKRPRY. Residues 37–43 and 65–67 contribute to the GTP site; these read GDEGKGK and GHT. D38 acts as the Proton acceptor in catalysis. Mg(2+) contacts are provided by D38 and G65. D38 serves as a coordination point for substrate. Residues 38–41, 63–66, T158, R172, N251, T266, and R330 contribute to the IMP site; these read DEGK and NAGH. H66 serves as the catalytic Proton donor. 326 to 332 is a binding site for substrate; that stretch reads VTTGRKR. GTP is bound by residues R332, 358-360, and 440-443; these read KLD and GVGK.

This sequence belongs to the adenylosuccinate synthetase family. In terms of assembly, homodimer. Mg(2+) is required as a cofactor.

The protein localises to the cytoplasm. The enzyme catalyses IMP + L-aspartate + GTP = N(6)-(1,2-dicarboxyethyl)-AMP + GDP + phosphate + 2 H(+). Its pathway is purine metabolism; AMP biosynthesis via de novo pathway; AMP from IMP: step 1/2. Component of the purine nucleotide cycle (PNC), which interconverts IMP and AMP to regulate the nucleotide levels in various tissues, and which contributes to glycolysis and ammoniagenesis. Catalyzes the first committed step in the biosynthesis of AMP from IMP. The sequence is that of Adenylosuccinate synthetase isozyme 1 (adss1) from Xenopus tropicalis (Western clawed frog).